Consider the following 565-residue polypeptide: Tyrosine-protein phosphatase non-receptor type 5 (565 aa).

Residues 1–16 (MNYEGARSERENHAAD) are compositionally biased toward basic and acidic residues. Residues 1-80 (MNYEGARSER…KPPPRGAGSH (80 aa)) form a disordered region. Residues 56 to 75 (MPPPPPPSPPSDPAQKPPPR) are compositionally biased toward pro residues. Transmembrane regions (helical) follow at residues 88–108 (LCLF…FSGY) and 146–166 (LLLV…WHLL). The tract at residues 169–189 (PPEPPTPLPPEDRRQSVSRQP) is disordered. The residue at position 245 (S245) is a Phosphoserine; by PKA. A Phosphothreonine; by MAPK modification is found at T255. At S268 the chain carries Phosphoserine; by MAPK. One can recognise a Tyrosine-protein phosphatase domain in the interval 300–555 (LQAEFFEIPM…QFVHHVMSLY (256 aa)). Residues D461, 496 to 502 (CSAGIGR), and Q540 contribute to the substrate site. The Phosphocysteine intermediate role is filled by C496.

This sequence belongs to the protein-tyrosine phosphatase family. Non-receptor class subfamily. Phosphorylation at Ser-245 by PKA deactivates PTPN5. Phosphorylation at Thr-255 and Ser-268 by MAPKs stabilizes the phosphatase, dephosphorylation of these sites results in ubiquitin-mediated degradation of the active phosphatase.

The protein resides in the endoplasmic reticulum membrane. It catalyses the reaction O-phospho-L-tyrosyl-[protein] + H2O = L-tyrosyl-[protein] + phosphate. May regulate the activity of several effector molecules involved in synaptic plasticity and neuronal cell survival, including MAPKs, Src family kinases and NMDA receptors. This chain is Tyrosine-protein phosphatase non-receptor type 5 (PTPN5), found in Homo sapiens (Human).